Consider the following 504-residue polypeptide: Cobyric acid synthase (504 aa).

The region spanning 251 to 448 is the GATase cobBQ-type domain; that stretch reads DITIAIVQLP…LHGLFDSDAF (198 aa). C332 serves as the catalytic Nucleophile. H440 is an active-site residue.

The protein belongs to the CobB/CobQ family. CobQ subfamily.

It participates in cofactor biosynthesis; adenosylcobalamin biosynthesis. In terms of biological role, catalyzes amidations at positions B, D, E, and G on adenosylcobyrinic A,C-diamide. NH(2) groups are provided by glutamine, and one molecule of ATP is hydrogenolyzed for each amidation. The polypeptide is Cobyric acid synthase (Salmonella gallinarum (strain 287/91 / NCTC 13346)).